The primary structure comprises 479 residues: Pre-glycoprotein polyprotein GP complex (479 aa).

Gly2 carries N-myristoyl glycine; by host lipidation. The Extracellular portion of the chain corresponds to 2 to 17; it reads GQLISFFQDIPIFFEE. Residues 18–32 traverse the membrane as a helical segment; that stretch reads ALNVALAVVTLLAII. Residue Lys33 is a topological domain, cytoplasmic. Residues 34–53 traverse the membrane as a helical segment; it reads GIVNVWKSGILQLFVFLVLA. Extracellular segments follow at residues 54–58 and 59–418; these read GRSCS and FKVG…TLVD. Cys57 lines the Zn(2+) pocket. Cystine bridges form between Cys85–Cys221, Cys265–Cys278, and Cys287–Cys296. Asn88, Asn125, Asn174, Asn202, and Asn214 each carry an N-linked (GlcNAc...) asparagine; by host glycan. N-linked (GlcNAc...) asparagine; by host glycans are attached at residues Asn314, Asn351, Asn359, Asn376, and Asn381. A disulfide bond links Cys350 and Cys371. Residues 419–439 traverse the membrane as a helical segment; that stretch reads LCFWSAIFFTTSLFLHLVGFP. Residues 440-479 are Cytoplasmic-facing; that stretch reads THRHIQGDPCPLPHRLDRNGACRCGRFQKLGKQVTWKRKH. Residues His441, His443, Cys449, His453, Cys461, Cys463, and His479 each contribute to the Zn(2+) site.

It belongs to the arenaviridae GPC protein family. As to quaternary structure, homotetramer; disulfide-linked. In terms of assembly, homotetramer. GP2 homotetramers bind through ionic interactions with GP1 homotetramers to form the GP complex together with the stable signal peptide. The GP-C polyprotein interacts with the host protease MBTPS1/SKI-1 resulting in the polyprotein processing. Specific enzymatic cleavages in vivo yield mature proteins. GP-C polyprotein is cleaved in the endoplasmic reticulum by the host protease MBTPS1. Only cleaved glycoprotein is incorporated into virions. In terms of processing, the SSP remains stably associated with the GP complex following cleavage by signal peptidase and plays crucial roles in the trafficking of GP through the secretory pathway. Post-translationally, myristoylation is necessary for GP2-mediated fusion activity.

The protein localises to the virion membrane. It localises to the host endoplasmic reticulum membrane. It is found in the host Golgi apparatus membrane. The protein resides in the host cell membrane. Functionally, interacts with the host receptor. Mediates virus attachment to host TFRC. This attachment induces virion internalization predominantly through clathrin-mediated endocytosis. Its function is as follows. Class I viral fusion protein that directs fusion of viral and host endosomal membranes, leading to delivery of the nucleocapsid into the cytoplasm. Membrane fusion is mediated by irreversible conformational changes induced upon acidification in the endosome. In terms of biological role, stable signal peptide (SSP): cleaved and functions as a signal peptide. In addition, it is also retained as the third component of the GP complex. The SSP is required for efficient glycoprotein expression, post-translational maturation cleavage of GP1 and GP2, glycoprotein transport to the cell surface plasma membrane, formation of infectious virus particles, and acid pH-dependent glycoprotein-mediated cell fusion. In Homo sapiens (Human), this protein is Pre-glycoprotein polyprotein GP complex.